A 212-amino-acid polypeptide reads, in one-letter code: Riboflavin kinase (212 aa).

The segment at 1 to 87 is H-T-H motif-like; it reads MKMKTLFLLI…YEEISTALYS (87 aa). The tract at residues 88–212 is riboflavin kinase; that stretch reads GFIVGEVISG…DGDKVRIEVV (125 aa). Residue 97 to 102 coordinates CDP; that stretch reads GIGEGA. Residues Thr124 and Asn126 each coordinate Mg(2+). FMN contacts are provided by Thr180 and Glu188. 193-196 contributes to the CDP binding site; sequence VKLR.

This sequence belongs to the archaeal riboflavin kinase family. The cofactor is Mg(2+).

It carries out the reaction riboflavin + CTP = CDP + FMN + H(+). It functions in the pathway cofactor biosynthesis; FMN biosynthesis; FMN from riboflavin (CTP route): step 1/1. Its function is as follows. Catalyzes the CTP-dependent phosphorylation of riboflavin (vitamin B2) to form flavin mononucleotide (FMN). The protein is Riboflavin kinase (ribK) of Pyrococcus abyssi (strain GE5 / Orsay).